Consider the following 226-residue polypeptide: MNSRDSAASEITPEVLLRAYACGIFPMAESADDPSLFWVEPELRGVIPLDGFRVASRLARTVRSDAFTLTVNQAFKAVMDGCAAPQPGREDTWINRRIRELYGGLHAMGHCHSVECWQDGELVGGLYGVSLGRAFFGESMFHRARDASKVALVHLVARLIAGGFELLDTQYVTEHLKTFGAVEIPRRRYTVLLEKALTGPAANFARLPTDRPLAGAEALAIIAERG.

This sequence belongs to the L/F-transferase family.

The protein localises to the cytoplasm. The enzyme catalyses N-terminal L-lysyl-[protein] + L-leucyl-tRNA(Leu) = N-terminal L-leucyl-L-lysyl-[protein] + tRNA(Leu) + H(+). It catalyses the reaction N-terminal L-arginyl-[protein] + L-leucyl-tRNA(Leu) = N-terminal L-leucyl-L-arginyl-[protein] + tRNA(Leu) + H(+). The catalysed reaction is L-phenylalanyl-tRNA(Phe) + an N-terminal L-alpha-aminoacyl-[protein] = an N-terminal L-phenylalanyl-L-alpha-aminoacyl-[protein] + tRNA(Phe). Functionally, functions in the N-end rule pathway of protein degradation where it conjugates Leu, Phe and, less efficiently, Met from aminoacyl-tRNAs to the N-termini of proteins containing an N-terminal arginine or lysine. The protein is Leucyl/phenylalanyl-tRNA--protein transferase of Bradyrhizobium sp. (strain ORS 278).